We begin with the raw amino-acid sequence, 122 residues long: Large ribosomal subunit protein uL14 (122 aa).

Belongs to the universal ribosomal protein uL14 family. In terms of assembly, part of the 50S ribosomal subunit. Forms a cluster with proteins L3 and L19. In the 70S ribosome, L14 and L19 interact and together make contacts with the 16S rRNA in bridges B5 and B8.

In terms of biological role, binds to 23S rRNA. Forms part of two intersubunit bridges in the 70S ribosome. The protein is Large ribosomal subunit protein uL14 of Buchnera aphidicola subsp. Schizaphis graminum (strain Sg).